The chain runs to 343 residues: Glycerol-3-phosphate dehydrogenase [NAD(P)+] (343 aa).

NADPH is bound by residues S11, W12, R32, and K106. Positions 106, 137, and 139 each coordinate sn-glycerol 3-phosphate. A141 is a binding site for NADPH. 5 residues coordinate sn-glycerol 3-phosphate: K192, D245, S255, R256, and N257. K192 functions as the Proton acceptor in the catalytic mechanism. R256 contacts NADPH. 2 residues coordinate NADPH: V280 and E282.

Belongs to the NAD-dependent glycerol-3-phosphate dehydrogenase family.

It is found in the cytoplasm. It carries out the reaction sn-glycerol 3-phosphate + NAD(+) = dihydroxyacetone phosphate + NADH + H(+). The enzyme catalyses sn-glycerol 3-phosphate + NADP(+) = dihydroxyacetone phosphate + NADPH + H(+). It functions in the pathway membrane lipid metabolism; glycerophospholipid metabolism. In terms of biological role, catalyzes the reduction of the glycolytic intermediate dihydroxyacetone phosphate (DHAP) to sn-glycerol 3-phosphate (G3P), the key precursor for phospholipid synthesis. This Syntrophomonas wolfei subsp. wolfei (strain DSM 2245B / Goettingen) protein is Glycerol-3-phosphate dehydrogenase [NAD(P)+].